A 184-amino-acid polypeptide reads, in one-letter code: Pyridoxal 5'-phosphate synthase subunit PdxT (184 aa).

46–48 (GES) provides a ligand contact to L-glutamine. The Nucleophile role is filled by C75. L-glutamine is bound by residues R101 and 129–130 (IR). Residues H165 and E167 each act as charge relay system in the active site.

The protein belongs to the glutaminase PdxT/SNO family. As to quaternary structure, in the presence of PdxS, forms a dodecamer of heterodimers. Only shows activity in the heterodimer.

The enzyme catalyses aldehydo-D-ribose 5-phosphate + D-glyceraldehyde 3-phosphate + L-glutamine = pyridoxal 5'-phosphate + L-glutamate + phosphate + 3 H2O + H(+). It catalyses the reaction L-glutamine + H2O = L-glutamate + NH4(+). Its pathway is cofactor biosynthesis; pyridoxal 5'-phosphate biosynthesis. In terms of biological role, catalyzes the hydrolysis of glutamine to glutamate and ammonia as part of the biosynthesis of pyridoxal 5'-phosphate. The resulting ammonia molecule is channeled to the active site of PdxS. This is Pyridoxal 5'-phosphate synthase subunit PdxT from Staphylococcus haemolyticus (strain JCSC1435).